The primary structure comprises 428 residues: G2/mitotic-specific cyclin-B (428 aa).

The protein belongs to the cyclin family. Cyclin AB subfamily. Interacts with the CDC2 protein kinase to form a serine/threonine kinase holoenzyme complex also known as maturation promoting factor (MPF). The cyclin subunit imparts substrate specificity to the complex.

Essential for the control of the cell cycle at the G2/M (mitosis) transition. The chain is G2/mitotic-specific cyclin-B from Spisula solidissima (Atlantic surf-clam).